The chain runs to 119 residues: Ribosome-binding factor A (119 aa).

It belongs to the RbfA family. As to quaternary structure, monomer. Binds 30S ribosomal subunits, but not 50S ribosomal subunits or 70S ribosomes.

Its subcellular location is the cytoplasm. Functionally, one of several proteins that assist in the late maturation steps of the functional core of the 30S ribosomal subunit. Associates with free 30S ribosomal subunits (but not with 30S subunits that are part of 70S ribosomes or polysomes). Required for efficient processing of 16S rRNA. May interact with the 5'-terminal helix region of 16S rRNA. This Chlorobium phaeovibrioides (strain DSM 265 / 1930) (Prosthecochloris vibrioformis (strain DSM 265)) protein is Ribosome-binding factor A.